A 735-amino-acid chain; its full sequence is Translation factor GUF1 homolog, chloroplastic (735 aa).

Disordered regions lie at residues 1–38 (MAVP…PSTS) and 106–126 (PENA…GVDN). The N-terminal 47 residues, 1-47 (MAVPTIPSPACISQSANGSIISTRRSTETNPRQHPSTSYRCAGRVVR), are a transit peptide targeting the chloroplast. Residues 11–38 (CISQSANGSIISTRRSTETNPRQHPSTS) show a composition bias toward polar residues. Over residues 106 to 115 (PENAEKDYSK) the composition is skewed to basic and acidic residues. One can recognise a tr-type G domain in the interval 137–319 (SNIRNFSIIA…AVVKKIPPPK (183 aa)). Residues 146–153 (AHIDHGKS), 212–216 (DTPGH), and 266–269 (NKID) contribute to the GTP site.

It belongs to the TRAFAC class translation factor GTPase superfamily. Classic translation factor GTPase family. LepA subfamily.

The protein resides in the plastid. It localises to the chloroplast. The enzyme catalyses GTP + H2O = GDP + phosphate + H(+). Functionally, promotes chloroplast protein synthesis. May act as a fidelity factor of the translation reaction, by catalyzing a one-codon backward translocation of tRNAs on improperly translocated ribosomes. This is Translation factor GUF1 homolog, chloroplastic from Physcomitrium patens (Spreading-leaved earth moss).